The following is a 477-amino-acid chain: MEDPLLLGDDQLITRNLKSTPTWWMNFTAELKNVSSMAAPMATVTVSQYLLPVISVMVAGHCGELQLSGVTLATAFANVSGFGIMYGLVGALETLCGQAYGAKQYTKIGTYTFSAIVSNVPIVVLISILWFYMDKLFVSLGQDPDISKVAGSYAVCLIPALLAQAVQQPLTRFLQTQGLVLPLLYCAITTLLFHIPVCLILVYAFGLGSNGAALAIGLSYWFNVLILALYVRFSSACEKTRGFVSDDFVLSVKQFFQYGIPSAAMTTIEWSLFELLILSSGLLPNPKLETSVLSICLTTSSLHCVIPMGIGAAGSTRISNELGAGNPEVARLAVFAGIFLWFLEATICSTLLFTCKNIFGYAFSNSKEVVDYVTELSSLLCLSFMVDGFSSVLDGVARGSGWQNIGAWANVVAYYLLGAPVGFFLGFWGHMNGKGLWIGVIVGSTAQGIILAIVTACLSWEEQAAKARERIVGRTLE.

Helical transmembrane passes span Ala-38–Val-58, Leu-72–Leu-92, Phe-113–Met-133, Ile-146–Val-166, Ala-187–Leu-207, Gly-211–Val-231, Ala-263–Leu-283, Val-292–Ala-312, Ala-333–Phe-353, Leu-376–Val-396, Val-411–Met-431, and Leu-436–Ala-456.

Belongs to the multi antimicrobial extrusion (MATE) (TC 2.A.66.1) family.

The protein resides in the membrane. This Arabidopsis thaliana (Mouse-ear cress) protein is Protein DETOXIFICATION 5.